The following is a 356-amino-acid chain: Histidinol-phosphate aminotransferase 1 (356 aa).

Lys210 carries the post-translational modification N6-(pyridoxal phosphate)lysine.

It belongs to the class-II pyridoxal-phosphate-dependent aminotransferase family. Histidinol-phosphate aminotransferase subfamily. In terms of assembly, homodimer. It depends on pyridoxal 5'-phosphate as a cofactor.

It catalyses the reaction L-histidinol phosphate + 2-oxoglutarate = 3-(imidazol-4-yl)-2-oxopropyl phosphate + L-glutamate. The protein operates within amino-acid biosynthesis; L-histidine biosynthesis; L-histidine from 5-phospho-alpha-D-ribose 1-diphosphate: step 7/9. This is Histidinol-phosphate aminotransferase 1 from Hydrogenovibrio crunogenus (strain DSM 25203 / XCL-2) (Thiomicrospira crunogena).